A 546-amino-acid chain; its full sequence is Phosphoglucomutase (546 aa).

Residue Ser-135 is the Phosphoserine intermediate of the active site. Mg(2+) is bound by residues Ser-135, Asp-288, Asp-290, and Asp-292.

This sequence belongs to the phosphohexose mutase family. Requires Mg(2+) as cofactor.

It catalyses the reaction alpha-D-glucose 1-phosphate = alpha-D-glucose 6-phosphate. It functions in the pathway glycolipid metabolism; diglucosyl-diacylglycerol biosynthesis. Its function is as follows. Catalyzes the interconversion between glucose-6-phosphate and alpha-glucose-1-phosphate. This is the first step in the biosynthesis of diglucosyl-diacylglycerol (Glc2-DAG), i.e. a glycolipid found in the membrane, which is also used as a membrane anchor for lipoteichoic acid (LTA). The polypeptide is Phosphoglucomutase (pgcA) (Staphylococcus epidermidis (strain ATCC 35984 / DSM 28319 / BCRC 17069 / CCUG 31568 / BM 3577 / RP62A)).